We begin with the raw amino-acid sequence, 971 residues long: Nucleolar protein dao-5 (971 aa).

Disordered regions lie at residues 61–926 (RIAS…QWGQ) and 938–971 (KAFR…DSDD). Positions 134-150 (KKPAQTPAQKKAASSSD) are enriched in low complexity. Residues 180–190 (SDSDSDSEDSD) show a composition bias toward acidic residues. Composition is skewed to low complexity over residues 264-275 (AKPAPAKATPKP), 294-304 (KKTPAKAAPKP), 324-335 (AKPTPAKATPKP), 355-366 (AKPAPAKATPKP), 386-397 (AKPTPAKATPKP), 417-428 (AKPTSAKATPKP), 447-457 (KKTPAKAAPKP), 476-498 (AKST…SSSD), 508-519 (AKPTPANATPKP), 539-550 (AKPTSAKATPKP), 569-579 (KKTPAKAAPKP), 598-620 (AKST…SSSD), 630-641 (AKPTSAKATPKP), 691-712 (KATP…SSSD), 751-761 (AKPTPKATPKQ), 780-791 (KKTPAKSTPAKT), and 815-825 (ATTPAKSTPKT). Over residues 907 to 921 (SVSEKFRNNQHDSHF) the composition is skewed to basic and acidic residues. Residues 939-950 (AFRHEKTKKKKG) show a composition bias toward basic residues. The segment covering 957–971 (INQSINSIKFSDSDD) has biased composition (polar residues).

This sequence belongs to the NOLC1 family. May form dimers. Interacts with RNA polymerase I. As to expression, expressed in the nerve ring and hypodermal tissues. Expressed in the intestine. Expressed in the germline.

The protein resides in the nucleus. It is found in the nucleolus. The protein localises to the nucleoplasm. Its function is as follows. Nucleolar protein which binds to RNA polymerase I and rDNA and is required for efficient RNA polymerase I-mediated rDNA transcription. Maintains the epigenetically active status of rDNA chromatin which facilitates rDNA transcription and sustains germline development, ensuring fertility. Plays a role in the modulation of nucleolus size. May play a role in the regulation of lifespan. The sequence is that of Nucleolar protein dao-5 from Caenorhabditis elegans.